The chain runs to 1077 residues: FKBP12-associated protein 1 homolog (1077 aa).

A disordered region spans residues 1–173 (METSKNPSDL…MPKNSKEIKK (173 aa)). Over residues 15–29 (ANVKKNRRRFQKSQK) the composition is skewed to basic residues. Serine 33 is subject to Phosphoserine. Residues 52–64 (EEVKTSLKEDSSK) are compositionally biased toward basic and acidic residues. Over residues 76-87 (PTSSVQLNVSKN) the composition is skewed to polar residues. The segment covering 100–116 (SSKDEELRKHAKGEGKR) has biased composition (basic and acidic residues). Residues 136–149 (SSNSSQETSSSKGS) are compositionally biased toward low complexity. Residues 153–173 (KSERSREAKSRMPKNSKEIKK) are compositionally biased toward basic and acidic residues. Residues 197-247 (CSVCTDTINPSTSIWSCGTCYHVFHLSCIRKWCKNSIEQRNEDAWRCPYCQ) form an RING-type; atypical zinc finger. 8 consecutive NF-X1-type zinc fingers follow at residues 290–308 (CEHP…PCTA), 348–367 (CGEH…ACFE), 420–441 (CGLH…HCPF), 485–503 (CGHR…TCSE), 541–558 (CGRH…SKAQ), 595–614 (CGNH…RCLE), 708–729 (CKTH…SCKK), and 738–760 (CEHV…PCKA). In terms of domain architecture, R3H spans 835–897 (SDFADEVESL…KRNVMVYNKG (63 aa)).

It belongs to the NFX1 family.

The protein resides in the cytoplasm. It localises to the golgi apparatus. The protein localises to the nucleus. Its function is as follows. May play a role in transcription regulation. In Schizosaccharomyces pombe (strain 972 / ATCC 24843) (Fission yeast), this protein is FKBP12-associated protein 1 homolog (fap1).